We begin with the raw amino-acid sequence, 555 residues long: MADGDGLGEAAIAAASPASAPGLSPSLGWRERLRAGLAGTGASLWFVAGLGLLYALRVPLRLCENLAAVTVFLNSLTPKFYVALTGTSSLISGLIFIFEWWYFHKHGTSFIEQVSVSHLRPLMGGTESSISEPGSPSNNRESETSRQNLSECKVWRNPLNLFRGAEYRRYTWVTGKEPLTYYDMNLSAQDHQTFFTCDTDFLRPSDTVMQKAWRERNPPARIKAAYQALELNNDCATAYVLLAEEEATTIVDAERLFKQALKAGETIYRRSQQCQHQSPQHEAQLRRDTNVLVYIKRRLAMCARKLGRIREAVKIMRDLMKEFPPLTMLNIHENLLESLLELQAYADVQAVLAKYDDISLPKSAAICYTAALLKTRTVSDKFSPETASRRGLSTAEINAVEAIHRAVEFNPHVPKYLLEMKSLILPPEHILKRGDSEAIAYAFFHLQHWKRIEGALHLLQCTWEGTFRMIPYPLEKGHLFYPYPSCTETADRELLPSFHHVSVYPKKEIPFFIHFTAGLCSSTAMIAFLTHQFPEIMGVFAKAVSMISRTCIEYL.

The next 2 helical transmembrane spans lie at 36-56 (GLAG…LYAL) and 80-100 (FYVA…IFEW). The disordered stretch occupies residues 126-148 (TESSISEPGSPSNNRESETSRQN).

The protein belongs to the ST7 family.

It localises to the membrane. In Bos taurus (Bovine), this protein is Suppressor of tumorigenicity 7 protein-like (ST7L).